We begin with the raw amino-acid sequence, 544 residues long: CTP synthase (544 aa).

The amidoligase domain stretch occupies residues 1–267 (MAKFVFVTGG…CRQVLDVLSL (267 aa)). Position 13 (serine 13) interacts with CTP. Serine 13 contacts UTP. ATP is bound by residues 14–19 (SIGKGI) and aspartate 71. Mg(2+) contacts are provided by aspartate 71 and glutamate 141. CTP-binding positions include 148 to 150 (DIE), 188 to 193 (KTKPTQ), and lysine 224. UTP-binding positions include 188–193 (KTKPTQ) and lysine 224. The Glutamine amidotransferase type-1 domain maps to 292 to 534 (KVALVGKYVQ…IQAASQRLPQ (243 aa)). Glycine 354 is a binding site for L-glutamine. Cysteine 381 serves as the catalytic Nucleophile; for glutamine hydrolysis. Residues 382–385 (LGMQ), glutamate 405, and arginine 462 each bind L-glutamine. Catalysis depends on residues histidine 507 and glutamate 509.

It belongs to the CTP synthase family. Homotetramer.

The enzyme catalyses UTP + L-glutamine + ATP + H2O = CTP + L-glutamate + ADP + phosphate + 2 H(+). The catalysed reaction is L-glutamine + H2O = L-glutamate + NH4(+). It carries out the reaction UTP + NH4(+) + ATP = CTP + ADP + phosphate + 2 H(+). Its pathway is pyrimidine metabolism; CTP biosynthesis via de novo pathway; CTP from UDP: step 2/2. With respect to regulation, allosterically activated by GTP, when glutamine is the substrate; GTP has no effect on the reaction when ammonia is the substrate. The allosteric effector GTP functions by stabilizing the protein conformation that binds the tetrahedral intermediate(s) formed during glutamine hydrolysis. Inhibited by the product CTP, via allosteric rather than competitive inhibition. In terms of biological role, catalyzes the ATP-dependent amination of UTP to CTP with either L-glutamine or ammonia as the source of nitrogen. Regulates intracellular CTP levels through interactions with the four ribonucleotide triphosphates. In Synechococcus sp. (strain RCC307), this protein is CTP synthase.